A 460-amino-acid chain; its full sequence is MEFSEWYSDILEKAGIYDLRYPIKGCGVYLPYGFKIRRYSFEILRKLLDETNHDETLFPMLIPENLLAKEGEHIKGFEDEVFWVTHGGKTPLEVKLALRPTSETTMYYMMKQWIKVHTDLPMKLYQVVNTFRYETKHTRPLIRLREIMSFKEAHTAHATKEDCDAQITEALNLYGEFFDEICVPYIISKRPEWDKFPGADYTMAFDTIYPDGKTMQIGTVHNLGQNFAKTFELEFETPDGEKDFVYQTCYGISDRAIASLISVHGDEKGLVIPVDVAPIQIVLIPLLFKGKEEIVMDKIKELNRTLKSEFRVLLDDRDIRPGRKYNDWEIKGVPLRIELGPRDIENGQALIVRRDTGEKITVEYSNILEEVEKIVSMYKENLKIKADEKIKNFLTVVDFESDVNALSEKVKAALLENKGIILIPFDESVYNEEFEELIDASVLGQTTYEGKDYISVARTY.

The protein belongs to the class-II aminoacyl-tRNA synthetase family. ProS type 3 subfamily. As to quaternary structure, homodimer.

Its subcellular location is the cytoplasm. The enzyme catalyses tRNA(Pro) + L-proline + ATP = L-prolyl-tRNA(Pro) + AMP + diphosphate. Functionally, catalyzes the attachment of proline to tRNA(Pro) in a two-step reaction: proline is first activated by ATP to form Pro-AMP and then transferred to the acceptor end of tRNA(Pro). This is Proline--tRNA ligase from Methanococcus maripaludis (strain C6 / ATCC BAA-1332).